We begin with the raw amino-acid sequence, 256 residues long: Imidazole glycerol phosphate synthase subunit HisF (256 aa).

Catalysis depends on residues D11 and D130.

The protein belongs to the HisA/HisF family. Heterodimer of HisH and HisF.

The protein resides in the cytoplasm. The enzyme catalyses 5-[(5-phospho-1-deoxy-D-ribulos-1-ylimino)methylamino]-1-(5-phospho-beta-D-ribosyl)imidazole-4-carboxamide + L-glutamine = D-erythro-1-(imidazol-4-yl)glycerol 3-phosphate + 5-amino-1-(5-phospho-beta-D-ribosyl)imidazole-4-carboxamide + L-glutamate + H(+). It participates in amino-acid biosynthesis; L-histidine biosynthesis; L-histidine from 5-phospho-alpha-D-ribose 1-diphosphate: step 5/9. Functionally, IGPS catalyzes the conversion of PRFAR and glutamine to IGP, AICAR and glutamate. The HisF subunit catalyzes the cyclization activity that produces IGP and AICAR from PRFAR using the ammonia provided by the HisH subunit. This Cupriavidus necator (strain ATCC 17699 / DSM 428 / KCTC 22496 / NCIMB 10442 / H16 / Stanier 337) (Ralstonia eutropha) protein is Imidazole glycerol phosphate synthase subunit HisF.